Here is a 155-residue protein sequence, read N- to C-terminus: MGKCVGVADTTFARVDMGSVAEEVLRRRLPGYRIVRHTVPGIKDLPGAAKRILSMGCEGVITLGWVGRREADKLSYLAASVGLIMVEVLTGKIVIDVTVHEDEAEAPEELAAIAVDRARKHAENLAALIREGPEALVKHAGMGLRQGYPDAGPIK.

Belongs to the DMRL synthase family.

It catalyses the reaction 2 6,7-dimethyl-8-(1-D-ribityl)lumazine + H(+) = 5-amino-6-(D-ribitylamino)uracil + riboflavin. The protein operates within cofactor biosynthesis; riboflavin biosynthesis; riboflavin from 2-hydroxy-3-oxobutyl phosphate and 5-amino-6-(D-ribitylamino)uracil: step 2/2. In Aeropyrum pernix (strain ATCC 700893 / DSM 11879 / JCM 9820 / NBRC 100138 / K1), this protein is Riboflavin synthase (ribC).